The following is a 95-amino-acid chain: Co-chaperonin GroES (95 aa).

Belongs to the GroES chaperonin family. Heptamer of 7 subunits arranged in a ring. Interacts with the chaperonin GroEL.

It localises to the cytoplasm. Functionally, together with the chaperonin GroEL, plays an essential role in assisting protein folding. The GroEL-GroES system forms a nano-cage that allows encapsulation of the non-native substrate proteins and provides a physical environment optimized to promote and accelerate protein folding. GroES binds to the apical surface of the GroEL ring, thereby capping the opening of the GroEL channel. The polypeptide is Co-chaperonin GroES (Syntrophotalea carbinolica (strain DSM 2380 / NBRC 103641 / GraBd1) (Pelobacter carbinolicus)).